The sequence spans 1209 residues: DNA-directed RNA polymerase subunit beta'' (1209 aa).

Positions 233, 308, 315, and 318 each coordinate Zn(2+).

The protein belongs to the RNA polymerase beta' chain family. RpoC2 subfamily. In plastids the minimal PEP RNA polymerase catalytic core is composed of four subunits: alpha, beta, beta', and beta''. When a (nuclear-encoded) sigma factor is associated with the core the holoenzyme is formed, which can initiate transcription. It depends on Zn(2+) as a cofactor.

Its subcellular location is the plastid. It localises to the chloroplast. The enzyme catalyses RNA(n) + a ribonucleoside 5'-triphosphate = RNA(n+1) + diphosphate. Functionally, DNA-dependent RNA polymerase catalyzes the transcription of DNA into RNA using the four ribonucleoside triphosphates as substrates. The chain is DNA-directed RNA polymerase subunit beta'' from Pinus koraiensis (Korean pine).